Consider the following 212-residue polypeptide: ER lumen protein-retaining receptor 2 (212 aa).

Over 1-4 (MNIF) the chain is Lumenal. A helical transmembrane segment spans residues 5-24 (RLTGDLSHLAAIIILLLKIW). Topologically, residues 25–32 (KSRSCAGI) are cytoplasmic. The helical transmembrane segment at 33–52 (SGKSQLLFALVFTTRYLDLF) threads the bilayer. The interaction with the K-D-E-L motif on target proteins stretch occupies residues 47 to 48 (RY). At 53–58 (TSFISL) the chain is on the lumenal side. The helical transmembrane segment at 59–79 (YNTSMKLIYIACSYATVYLIY) threads the bilayer. Topologically, residues 80-92 (MKFKATYDGNHDT) are cytoplasmic. Residues 93–110 (FRVEFLIVPVGGLSFLVN) form a helical membrane-spanning segment. Topologically, residues 111 to 116 (HDFSPL) are lumenal. The helical transmembrane segment at 117–135 (EILWTFSIYLESVAILPQL) threads the bilayer. Residues 136–149 (FMISKTGEAETITT) lie on the Cytoplasmic side of the membrane. A helical membrane pass occupies residues 150-168 (HYLFFLGLYRALYLVNWIW). The tract at residues 159 to 169 (RALYLVNWIWR) is interaction with the K-D-E-L motif on target proteins. Residues 169–178 (RYYFEGFFDL) lie on the Lumenal side of the membrane. Residues 179-199 (IAVVAGVVQTVLYCDFFYLYV) form a helical membrane-spanning segment. The Cytoplasmic portion of the chain corresponds to 200–212 (TKVLKGKKLSLPA). The tract at residues 204-207 (KGKK) is important for recycling of cargo proteins with the sequence motif K-D-E-L from the Golgi to the endoplasmic reticulum.

This sequence belongs to the ERD2 family.

The protein localises to the endoplasmic reticulum membrane. Its subcellular location is the golgi apparatus membrane. It is found in the cytoplasmic vesicle. It localises to the COPI-coated vesicle membrane. Membrane receptor that binds the K-D-E-L sequence motif in the C-terminal part of endoplasmic reticulum resident proteins and maintains their localization in that compartment by participating to their vesicle-mediated recycling back from the Golgi. Binding is pH dependent, and is optimal at pH 5-5.4. This is ER lumen protein-retaining receptor 2 (KDELR2) from Gallus gallus (Chicken).